A 327-amino-acid polypeptide reads, in one-letter code: COP9 signalosome complex subunit 7 (327 aa).

Residues 4-165 form the PCI domain; sequence VHHRALDALQ…NPPTVNVTSV (162 aa). Disordered stretches follow at residues 233-260 and 276-327; these read GGEQ…AGWK and GGSN…GKKS. Residues 236–255 show a composition bias toward gly residues; sequence QLQGGNPGQGQGQGQGGLGK. A compositionally biased stretch (basic residues) spans 315-327; it reads GARHSKRFLGKKS.

Belongs to the CSN7/EIF3M family. CSN7 subfamily. Component of the COP9 signalosome (CSN) complex. As to expression, present in uninduced vegetative hyphae, induced conidiating cultures and in both conidiospores and ascospores.

It is found in the cytoplasm. The protein resides in the nucleus. Its function is as follows. Component of the COP9 signalosome (CSN) complex that acts as an regulator of the ubiquitin (Ubl) conjugation pathway by mediating the deneddylation of the cullin subunit of SCF-type E3 ubiquitin-protein ligase complexes. The CSN complex seems to link protein degradation to sexual development. May be required for sporulation only at elevated temperatures. The polypeptide is COP9 signalosome complex subunit 7 (csnG) (Emericella nidulans (strain FGSC A4 / ATCC 38163 / CBS 112.46 / NRRL 194 / M139) (Aspergillus nidulans)).